A 164-amino-acid chain; its full sequence is Large ribosomal subunit protein uL15 (164 aa).

Polar residues predominate over residues 1–14; sequence MKLNEIQDNPGSSK. Positions 1–35 are disordered; it reads MKLNEIQDNPGSSKSRMRVGRGIGSGKGKTCGRGV. Over residues 21 to 35 the composition is skewed to gly residues; it reads RGIGSGKGKTCGRGV.

This sequence belongs to the universal ribosomal protein uL15 family. In terms of assembly, part of the 50S ribosomal subunit.

Binds to the 23S rRNA. This chain is Large ribosomal subunit protein uL15, found in Methylocella silvestris (strain DSM 15510 / CIP 108128 / LMG 27833 / NCIMB 13906 / BL2).